We begin with the raw amino-acid sequence, 200 residues long: Small ribosomal subunit protein uS4 (200 aa).

Positions 1 to 13 (MARYRGPKQKIAR) are enriched in basic residues. Positions 1–44 (MARYRGPKQKIARRFKEPIFGPSKALERKPYPPGQHGQSRRRRE) are disordered. One can recognise an S4 RNA-binding domain in the interval 92–154 (ARLDNTVFRM…SQDLEVIQTN (63 aa)).

It belongs to the universal ribosomal protein uS4 family. Part of the 30S ribosomal subunit. Contacts protein S5. The interaction surface between S4 and S5 is involved in control of translational fidelity.

Functionally, one of the primary rRNA binding proteins, it binds directly to 16S rRNA where it nucleates assembly of the body of the 30S subunit. With S5 and S12 plays an important role in translational accuracy. In Salinibacter ruber (strain DSM 13855 / M31), this protein is Small ribosomal subunit protein uS4.